Here is a 258-residue protein sequence, read N- to C-terminus: Indole-3-glycerol phosphate synthase (258 aa).

Belongs to the TrpC family.

The catalysed reaction is 1-(2-carboxyphenylamino)-1-deoxy-D-ribulose 5-phosphate + H(+) = (1S,2R)-1-C-(indol-3-yl)glycerol 3-phosphate + CO2 + H2O. The protein operates within amino-acid biosynthesis; L-tryptophan biosynthesis; L-tryptophan from chorismate: step 4/5. This Chlorobium limicola (strain DSM 245 / NBRC 103803 / 6330) protein is Indole-3-glycerol phosphate synthase.